The following is a 98-amino-acid chain: Derivative of benzaldehyde biosynthesis cluster protein C (98 aa).

Belongs to the YciI family.

It functions in the pathway secondary metabolite biosynthesis. Functionally, part of the gene cluster that mediates the biosynthesis of the antibiotic 2,4-dihydroxy-3-methyl-6-(2-oxopropyl)benzaldehyde (DHMBA) and its derivatives. The direct non-reducing polyketide synthase dbaI product is 2,4-dihydroxy-3-methyl-6-(2-oxopropyl)benzaldehyde (DHMBA), produced by condensation of one acetyl-CoA starter unit with 4 malonyl-CoA units and one methylation step. The FAD-dependent monooxygenase dbaH is responsible for the synthesis of yellow pigments derived from the oxidation of DHMBA. The roles of dbaB, C, E and F have still to be determined. In Emericella nidulans (strain FGSC A4 / ATCC 38163 / CBS 112.46 / NRRL 194 / M139) (Aspergillus nidulans), this protein is Derivative of benzaldehyde biosynthesis cluster protein C.